The primary structure comprises 184 residues: C-phycoerythrin class 1 subunit beta (184 aa).

Residues cysteine 50 and cysteine 61 each contribute to the (2R,3E)-phycoerythrobilin site. N4-methylasparagine is present on asparagine 72. Residues cysteine 82 and cysteine 165 each coordinate (2R,3E)-phycoerythrobilin.

This sequence belongs to the phycobiliprotein family. Heterodimer of an alpha and a beta chain. Contains three covalently linked phycoerythrobilin chromophores.

The protein localises to the cellular thylakoid membrane. Functionally, light-harvesting photosynthetic bile pigment-protein from the phycobiliprotein complex. The sequence is that of C-phycoerythrin class 1 subunit beta (cpeB) from Synechococcus sp. (strain WH8020).